Reading from the N-terminus, the 546-residue chain is EH domain-containing protein 2 (546 aa).

EF-hand domains are found at residues 15-50 (EHQK…SKLS) and 51-84 (RQEL…VSLA). Positions 16-94 (HQKIYKEWFN…QEGHEITSDL (79 aa)) constitute an EH domain. Positions 28, 30, 32, 34, 39, 62, and 73 each coordinate Ca(2+). Residues 194–430 (FDAKPMVMLL…LLADLMDVPK (237 aa)) enclose the Dynamin-type G domain. A G1 motif region spans residues 204-211 (GQYSTGKT). A GTP-binding site is contributed by 204–211 (GQYSTGKT). The interval 230–231 (EP) is G2 motif. Positions 292–295 (DTPG) are G3 motif. GTP contacts are provided by residues 292–296 (DTPGV) and Lys359. Positions 358-361 (NKAD) are G4 motif. A region of interest (G5 motif) is located at residue Val382. Residue 395-398 (SFND) coordinates GTP. The short motif at 429-436 (PKKACDRK) is the Nuclear localization signal element. The stretch at 467-490 (KSKAQQRLMDNLEEEFGKVQREFH) forms a coiled coil.

The protein belongs to the TRAFAC class dynamin-like GTPase superfamily. Dynamin/Fzo/YdjA family. EHD subfamily. As to quaternary structure, homooligomer, and heterooligomer with EHD1. Interacts with AP-4 complex subunit sigma (At2g19790).

It is found in the endosome membrane. Its subcellular location is the cell membrane. The protein localises to the nucleus. The protein resides in the cytoplasm. The catalysed reaction is GTP + H2O = GDP + phosphate + H(+). In terms of biological role, involved in endocytosis negative regulation, probably by influencing actin organization. Acts in early endocytic membrane fusion and membrane trafficking of recycling endosomes. Exhibits an inhibitory effect on endocytosis when over-expressed. The sequence is that of EH domain-containing protein 2 from Arabidopsis thaliana (Mouse-ear cress).